A 325-amino-acid polypeptide reads, in one-letter code: Methionyl-tRNA formyltransferase (325 aa).

111–114 (SILP) lines the (6S)-5,6,7,8-tetrahydrofolate pocket.

It belongs to the Fmt family.

It catalyses the reaction L-methionyl-tRNA(fMet) + (6R)-10-formyltetrahydrofolate = N-formyl-L-methionyl-tRNA(fMet) + (6S)-5,6,7,8-tetrahydrofolate + H(+). In terms of biological role, attaches a formyl group to the free amino group of methionyl-tRNA(fMet). The formyl group appears to play a dual role in the initiator identity of N-formylmethionyl-tRNA by promoting its recognition by IF2 and preventing the misappropriation of this tRNA by the elongation apparatus. The chain is Methionyl-tRNA formyltransferase from Microcystis aeruginosa (strain NIES-843 / IAM M-2473).